A 170-amino-acid chain; its full sequence is Cyclic dof factor 4 (170 aa).

Residues 25–51 (NEEETHPPEQEATIAVRSSSSSDLTAE) form a disordered region. The Dof-type zinc-finger motif lies at 58–112 (IACPRCKSMETKFCYFNNYNVNQPRHFCKGCHRYWTAGGALRNVPVGAGRRKSKP). Cys-60, Cys-63, Cys-85, and Cys-88 together coordinate Zn(2+).

Expressed in the vasculature of cotyledons and hypocotyls, leaves and roots.

Its subcellular location is the nucleus. Its function is as follows. Transcription factor that binds specifically to a 5'-AA[AG]G-3' consensus core sequence. Transcriptional repressor of 'CONSTANS' expression. Regulates a photoperiodic flowering response. The protein is Cyclic dof factor 4 (CDF4) of Arabidopsis thaliana (Mouse-ear cress).